We begin with the raw amino-acid sequence, 121 residues long: uncharacterized protein (121 aa).

A coiled-coil region spans residues 8–37; it reads KQLMVCRDEIKKLKLKEKEAKNRILTYLKN.

This is an uncharacterized protein from Aedes vexans (Inland floodwater mosquito).